A 225-amino-acid chain; its full sequence is Protein-disulfide oxidoreductase DsbI (225 aa).

A helical membrane pass occupies residues 27 to 47 (FLWLLMAIAMGGLIILAHSFF). A disulfide bond links Cys56 and Cys59. Helical transmembrane passes span 65-85 (AMFVMVIGGVIAAINPKNIVL) and 87-107 (LIGCIAAFYGSIMGIKFSIKL). A disulfide bridge connects residues Cys128 and Cys154. The helical transmembrane segment at 199–219 (CMLAFGLCLILLLVMSGAWAL) threads the bilayer.

Belongs to the DsbB family. DsbI subfamily. In terms of assembly, interacts with DsbL.

The protein localises to the cell inner membrane. Its function is as follows. Required for disulfide bond formation in some proteins. Part of a redox system composed of DsbI and DsbL that mediates formation of an essential disulfide bond in AssT. The sequence is that of Protein-disulfide oxidoreductase DsbI from Salmonella choleraesuis (strain SC-B67).